We begin with the raw amino-acid sequence, 934 residues long: Diacylglycerol kinase theta (934 aa).

Positions 1 to 50 (MAAAAEPGARTWPGSGSPRLGSPAGSPVLGISGRTRPGSGPERTSRAIGS) are disordered. Phosphoserine is present on residues Ser22 and Ser26. 3 Phorbol-ester/DAG-type zinc fingers span residues 54–102 (GHSF…KTPC), 115–162 (AHCF…CSDC), and 177–228 (HHHW…APEC). The Ras-associating domain maps to 387–486 (TQEILKIYPG…TRFYVAETRA (100 aa)). 2 consecutive short sequence motifs (LXXLL motif) follow at residues 547–551 (LYMLA) and 566–570 (LPDVL). The DAGKc domain maps to 576-713 (PDCCPLLVFV…MDRWTILLDA (138 aa)). The span at 905–916 (LRKAKQKPRKAG) shows a compositional bias: basic residues. The interval 905–934 (LRKAKQKPRKAGANRDTRVDTLPAPEGNPL) is disordered.

This sequence belongs to the eukaryotic diacylglycerol kinase family. Interacts with RHOA (constitutively activated, GTP-bound); the interaction inhibits DGKQ. Interacts with PRKCE. Interacts with PRKCH. Interacts with PLCB1. Interacts with NR5A1; the interaction requires both LXXLL motifs in DGKQ and is required for full phosphatidic acid-mediated activation of NR5A1. In terms of processing, phosphorylated by PRKCE and PRKCH in vitro. Widely expressed in all brain regions, including the cortex and hippocampus with a specific expression in neuronal cells (at protein level).

The protein resides in the cytoplasm. It is found in the cytosol. The protein localises to the cell membrane. Its subcellular location is the synapse. It localises to the cytoskeleton. The protein resides in the nucleus. It is found in the nucleus speckle. The protein localises to the nucleus matrix. It carries out the reaction a 1,2-diacyl-sn-glycerol + ATP = a 1,2-diacyl-sn-glycero-3-phosphate + ADP + H(+). The catalysed reaction is a 1-O-alkyl-sn-glycerol + ATP = a 1-O-alkyl-sn-glycero-3-phosphate + ADP + H(+). It catalyses the reaction 1-O-alkyl-2-acyl-sn-glycerol + ATP = 1-O-alkyl-2-acyl-sn-glycero-3-phosphate + ADP + H(+). The enzyme catalyses 1,2-di-(9Z-octadecenoyl)-sn-glycerol + ATP = 1,2-di-(9Z-octadecenoyl)-sn-glycero-3-phosphate + ADP + H(+). It carries out the reaction 1-O-hexadecyl-sn-glycerol + ATP = 1-O-hexadecyl-sn-glycero-3-phosphate + ADP + H(+). The catalysed reaction is 1-O-hexadecyl-2-acetyl-sn-glycerol + ATP = 1-O-hexadecyl-2-acetyl-sn-glycero-3-phosphate + ADP + H(+). It catalyses the reaction 1-octadecanoyl-2-(5Z,8Z,11Z,14Z-eicosatetraenoyl)-sn-glycerol + ATP = 1-octadecanoyl-2-(5Z,8Z,11Z,14Z-eicosatetraenoyl)-sn-glycero-3-phosphate + ADP + H(+). It participates in lipid metabolism; glycerolipid metabolism. With respect to regulation, activated by phosphatidylserine. Its function is as follows. Diacylglycerol kinase that converts diacylglycerol/DAG into phosphatidic acid/phosphatidate/PA and regulates the respective levels of these two bioactive lipids. Thereby, acts as a central switch between the signaling pathways activated by these second messengers with different cellular targets and opposite effects in numerous biological processes. Within the adrenocorticotropic hormone signaling pathway, produces phosphatidic acid which in turn activates NR5A1 and subsequent steroidogenic gene transcription. Also functions downstream of the nerve growth factor signaling pathway being specifically activated in the nucleus by the growth factor. Through its diacylglycerol activity also regulates synaptic vesicle endocytosis. The protein is Diacylglycerol kinase theta (Dgkq) of Mus musculus (Mouse).